Reading from the N-terminus, the 794-residue chain is Zinc finger protein 148 (794 aa).

Lysine 6 is covalently cross-linked (Glycyl lysine isopeptide (Lys-Gly) (interchain with G-Cter in SUMO2)). At serine 51 the chain carries Phosphoserine. Residues lysine 88, lysine 115, and lysine 132 each participate in a glycyl lysine isopeptide (Lys-Gly) (interchain with G-Cter in SUMO2) cross-link. A C2H2-type 1 zinc finger spans residues 171 to 193 (HVCEHCNAAFRTNYHLQRHVFIH). Phosphothreonine is present on threonine 194. 2 consecutive C2H2-type zinc fingers follow at residues 199–221 (FQCSQCDMRFIQKYLLQRHEKIH) and 227–249 (FRCDECGMRFIQKYHMERHKRTH). The residue at position 250 (serine 250) is a Phosphoserine. The segment at 255-278 (YQCEYCLQYFSRTDRVLKHKRMCH) adopts a C2H2-type 4 zinc-finger fold. Lysine 291 is covalently cross-linked (Glycyl lysine isopeptide (Lys-Gly) (interchain with G-Cter in SUMO2)). A disordered region spans residues 298 to 346 (EEDSGFSTSPKDNSLPKKKRQKPEKKSSGMDKESVLDKSDTKKDRNDYL). Phosphoserine is present on residues serine 301 and serine 306. Residue lysine 308 forms a Glycyl lysine isopeptide (Lys-Gly) (interchain with G-Cter in SUMO2) linkage. Residues 321-344 (EKKSSGMDKESVLDKSDTKKDRND) show a composition bias toward basic and acidic residues. Lysine 356 participates in a covalent cross-link: Glycyl lysine isopeptide (Lys-Gly) (interchain with G-Cter in SUMO1); alternate. Residue lysine 356 forms a Glycyl lysine isopeptide (Lys-Gly) (interchain with G-Cter in SUMO2); alternate linkage. Lysine 402 is covalently cross-linked (Glycyl lysine isopeptide (Lys-Gly) (interchain with G-Cter in SUMO2)). The residue at position 412 (serine 412) is a Phosphoserine. Residues lysine 421 and lysine 424 each participate in a glycyl lysine isopeptide (Lys-Gly) (interchain with G-Cter in SUMO2) cross-link. Residues 574 to 588 (NSSDVPEVTQSENVG) are compositionally biased toward polar residues. The interval 574–596 (NSSDVPEVTQSENVGSSSQASSS) is disordered. N6-acetyllysine is present on lysine 607. 2 positions are modified to phosphoserine: serine 665 and serine 784.

It belongs to the krueppel C2H2-type zinc-finger protein family. Interacts with HNRNPDL. Interacts with the 5FMC complex; the interaction requires association with CHTOP. Interacts with CAVIN1. Sumoylated with SUMO2. Desumoylated by SENP3, resulting in the stimulation of transcription of its target genes. As to expression, expressed in heart, lung, kidney, skeletal muscle, liver, brain and spleen.

It is found in the nucleus. In terms of biological role, involved in transcriptional regulation. Represses the transcription of a number of genes including gastrin, stromelysin and enolase. Binds to the G-rich box in the enhancer region of these genes. The chain is Zinc finger protein 148 (Znf148) from Rattus norvegicus (Rat).